Here is a 158-residue protein sequence, read N- to C-terminus: Small ribosomal subunit protein uS13 (158 aa).

The protein belongs to the universal ribosomal protein uS13 family. Part of the 30S ribosomal subunit. Forms a loose heterodimer with protein S19. Forms two bridges to the 50S subunit in the 70S ribosome.

Located at the top of the head of the 30S subunit, it contacts several helices of the 16S rRNA. In the 70S ribosome it contacts the 23S rRNA (bridge B1a) and protein L5 of the 50S subunit (bridge B1b), connecting the 2 subunits; these bridges are implicated in subunit movement. In Picrophilus torridus (strain ATCC 700027 / DSM 9790 / JCM 10055 / NBRC 100828 / KAW 2/3), this protein is Small ribosomal subunit protein uS13.